We begin with the raw amino-acid sequence, 584 residues long: MPQLGGGRGGAGGGGGGSGAGATSGGDDLGANDELIPFQDEGGEEQEPSSDTASAQRDLDEVKSSLVNESENQSSSSDSEAERRPQPARDAFQKPRDYFAEVRRPQDGAFFKGGAYPGYPFLMIPDLSSPYLSNGPLSPGGARTYLQMKWPLLDVPSSATVKDTRSPSPAHLSNKVPVVQHPHHMHPLTPLITYSNDHFSPASPPTHLSPEIDPKTGIPRPPHPSELSPYYPLSPGAVGQIPHPLGWLVPQQGQPMYSLPPGGFRHPYPALAMNASMSSLVSSRFPHMVAPAHPGLPTSGIPHPAIVSPIVKQEPAAPSLSPAVSAKSPVTVKKEEEKKPHVKKPLNAFMLYMKEMRAKVVAECTLKESAAINQILGRKWHNLSREEQAKYYELARKERQLHAQLYPTWSARDNYGKKKKRKREKQLSQTQSQQQIQEAEGALASKSKKPCIQYLPPEKPCDSPASSHGSALDSPATPSAALASPAAPAATHSEQAQPLSLTTKPEARAQLALHSAAFLSAKAAASNSSQMGSQPPLLSRPLPLGSMPAALLTSPPTFPATLHAHQALPVLQAQPLSLVTKSAH.

Residues methionine 1–aspartate 28 are compositionally biased toward gly residues. The interval methionine 1–glutamate 71 is CTNNB1-binding. 3 disordered regions span residues methionine 1 to phenylalanine 99, alanine 159 to valine 179, and tyrosine 194 to tyrosine 231. The span at serine 64 to aspartate 78 shows a compositional bias: low complexity. Positions glutamate 80–phenylalanine 99 are enriched in basic and acidic residues. The segment at residues valine 342–serine 410 is a DNA-binding region (HMG box). The interval arginine 412 to leucine 501 is disordered. Residues lysine 417–arginine 423 carry the Nuclear localization signal motif. Composition is skewed to low complexity over residues leucine 427–glutamine 437 and serine 470–threonine 491. Positions histidine 492–leucine 501 are enriched in polar residues.

The protein belongs to the TCF/LEF family. As to quaternary structure, binds the armadillo repeat of CTNNB1 and forms a stable complex. Interacts with DAZAP2. In terms of tissue distribution, detected in the basal layer of epidermis and in outer root sheath and bulge of hair follicles.

Its subcellular location is the nucleus. In terms of biological role, participates in the Wnt signaling pathway. Binds to DNA and acts as a repressor in the absence of CTNNB1, and as an activator in its presence. Necessary for the terminal differentiation of epidermal cells, the formation of keratohyalin granules and the development of the barrier function of the epidermis. This Mus musculus (Mouse) protein is Transcription factor 7-like 1 (Tcf7l1).